The sequence spans 438 residues: Transmembrane protease serine 11F (438 aa).

Residues 1-32 (MMYAPVEFSEAEFSRAEYQRKQQFWDSVRLAL) are Cytoplasmic-facing. A helical; Signal-anchor for type II membrane protein membrane pass occupies residues 33–53 (FTLAIVAIIGIAIGIVTHFVV). Residues 54-438 (EDDKSFYYLA…RDWIASKTGM (385 aa)) are Extracellular-facing. The region spanning 57–175 (KSFYYLASFK…PSFRLTPIDS (119 aa)) is the SEA domain. Positions 206-437 (IVQGRETAME…YRDWIASKTG (232 aa)) constitute a Peptidase S1 domain. A disulfide bond links Cys233 and Cys249. Residues His248 and Asp293 each act as charge relay system in the active site. Cystine bridges form between Cys358/Cys374 and Cys385/Cys413. Catalysis depends on Ser389, which acts as the Charge relay system.

It belongs to the peptidase S1 family.

It is found in the membrane. In terms of biological role, probable serine protease. In Homo sapiens (Human), this protein is Transmembrane protease serine 11F (TMPRSS11F).